The following is a 168-amino-acid chain: Xanthine-guanine phosphoribosyltransferase (168 aa).

5-phospho-alpha-D-ribose 1-diphosphate-binding positions include 43–44 (RG) and 102–110 (DDLVDTGAT). Residue Asp103 participates in Mg(2+) binding. Guanine is bound by residues Asp106 and Ile149. 2 residues coordinate xanthine: Asp106 and Ile149. GMP contacts are provided by residues 106 to 110 (DTGAT) and 148 to 149 (WI).

It belongs to the purine/pyrimidine phosphoribosyltransferase family. XGPT subfamily. In terms of assembly, homotetramer. Requires Mg(2+) as cofactor.

The protein localises to the cell inner membrane. It catalyses the reaction GMP + diphosphate = guanine + 5-phospho-alpha-D-ribose 1-diphosphate. It carries out the reaction XMP + diphosphate = xanthine + 5-phospho-alpha-D-ribose 1-diphosphate. The enzyme catalyses IMP + diphosphate = hypoxanthine + 5-phospho-alpha-D-ribose 1-diphosphate. It functions in the pathway purine metabolism; GMP biosynthesis via salvage pathway; GMP from guanine: step 1/1. The protein operates within purine metabolism; XMP biosynthesis via salvage pathway; XMP from xanthine: step 1/1. Functionally, purine salvage pathway enzyme that catalyzes the transfer of the ribosyl-5-phosphate group from 5-phospho-alpha-D-ribose 1-diphosphate (PRPP) to the N9 position of the 6-oxopurines guanine and xanthine to form the corresponding ribonucleotides GMP (guanosine 5'-monophosphate) and XMP (xanthosine 5'-monophosphate), with the release of PPi. To a lesser extent, also acts on hypoxanthine. The protein is Xanthine-guanine phosphoribosyltransferase of Nitrobacter hamburgensis (strain DSM 10229 / NCIMB 13809 / X14).